A 216-amino-acid polypeptide reads, in one-letter code: Probable nicotinate-nucleotide adenylyltransferase (216 aa).

The protein belongs to the NadD family.

The catalysed reaction is nicotinate beta-D-ribonucleotide + ATP + H(+) = deamido-NAD(+) + diphosphate. It functions in the pathway cofactor biosynthesis; NAD(+) biosynthesis; deamido-NAD(+) from nicotinate D-ribonucleotide: step 1/1. Its function is as follows. Catalyzes the reversible adenylation of nicotinate mononucleotide (NaMN) to nicotinic acid adenine dinucleotide (NaAD). The protein is Probable nicotinate-nucleotide adenylyltransferase of Geotalea daltonii (strain DSM 22248 / JCM 15807 / FRC-32) (Geobacter daltonii).